The chain runs to 194 residues: Fe/S biogenesis protein NfuA (194 aa).

[4Fe-4S] cluster is bound by residues Cys-152 and Cys-155.

Belongs to the NfuA family. In terms of assembly, homodimer. [4Fe-4S] cluster serves as cofactor.

Functionally, involved in iron-sulfur cluster biogenesis. Binds a 4Fe-4S cluster, can transfer this cluster to apoproteins, and thereby intervenes in the maturation of Fe/S proteins. Could also act as a scaffold/chaperone for damaged Fe/S proteins. The polypeptide is Fe/S biogenesis protein NfuA (Stutzerimonas stutzeri (strain A1501) (Pseudomonas stutzeri)).